A 420-amino-acid chain; its full sequence is Transcription factor IIIB 50 kDa subunit (420 aa).

A TFIIB-type zinc finger spans residues Asn3–Thr36. Residues Cys7, Cys10, Cys28, and Cys31 each coordinate Zn(2+). Repeat copies occupy residues Asp72–Val157 and Val173–Gln249. Residues Ala108–Lys114 are interaction with target DNA. The disordered stretch occupies residues Thr316 to Asp387. Over residues Gln322–Gln336 the composition is skewed to low complexity. Ser354 is modified (phosphoserine). Positions Leu358 to Leu364 are required for the formation of a ternary complex with DNA and TBP; not required for interaction with TBP in the absence of DNA. Position 362 is a cysteine sulfenic acid (-SOH) (Cys362). Positions Pro366–Pro420 are required for interaction with TBP and formation of a ternary complex with DNA and TBP.

The protein belongs to the TFIIB family. As to quaternary structure, component of TFIIIB complexes. The TFIIIB complex has two activities, alpha and beta. The TFIIIB-alpha activity complex is composed of TBP, BDP1, and a complex containing both BRF2 and at least four stably associated proteins; this complex inhibits the transcription by pol III via its phosphorylation by CK2; YY1 facilitates the TFIIIB-alpha complex formation. Interacts with TBP; this interaction promotes recruitment of BRF2 to TATA box-containing promoters. Interacts with TBP and the BURE sequence (GC-rich sequence downstream from the TATA box) to form a strong ternary complex which is joined by BDP1; this ternary complex stimulates pol III transcription. Forms a trimeric complex composed of TBP, BRF2 and mini-SNAPc complex (SNAP43, SNAP50, and the N-terminal third of SNAP190) on the promoter. Assembly of the TBP-BRF2 complex is stimulated by SNAP190. Interacts with MAF1 and SNAPC4. Post-translationally, in response to oxidative stress, Cys-362 is reversibly oxidized to cysteine sulfenic acid. Oxidation of Cys-362 impairs formation of a ternary complex with TBP and DNA and down-regulates expression of target genes in response to oxidative stress.

Its subcellular location is the nucleus. Functionally, general activator of RNA polymerase III transcription. Factor exclusively required for RNA polymerase III transcription of genes with promoter elements upstream of the initiation sites. Contributes to the regulation of gene expression; functions as activator in the absence of oxidative stress. Down-regulates expression of target genes in response to oxidative stress. Overexpression protects cells against apoptosis in response to oxidative stress. The chain is Transcription factor IIIB 50 kDa subunit (Brf2) from Mus musculus (Mouse).